The sequence spans 106 residues: UPF0145 protein PFL_3418 (106 aa).

Belongs to the UPF0145 family.

The polypeptide is UPF0145 protein PFL_3418 (Pseudomonas fluorescens (strain ATCC BAA-477 / NRRL B-23932 / Pf-5)).